Consider the following 324-residue polypeptide: Glyoxylate/hydroxypyruvate reductase B (324 aa).

Active-site residues include Arg-237 and Glu-266. His-285 acts as the Proton donor in catalysis.

This sequence belongs to the D-isomer specific 2-hydroxyacid dehydrogenase family. GhrB subfamily. As to quaternary structure, homodimer.

Its subcellular location is the cytoplasm. It carries out the reaction glycolate + NADP(+) = glyoxylate + NADPH + H(+). The catalysed reaction is (R)-glycerate + NAD(+) = 3-hydroxypyruvate + NADH + H(+). The enzyme catalyses (R)-glycerate + NADP(+) = 3-hydroxypyruvate + NADPH + H(+). Catalyzes the NADPH-dependent reduction of glyoxylate and hydroxypyruvate into glycolate and glycerate, respectively. In Cronobacter sakazakii (strain ATCC BAA-894) (Enterobacter sakazakii), this protein is Glyoxylate/hydroxypyruvate reductase B.